A 249-amino-acid polypeptide reads, in one-letter code: 5'-nucleotidase SurE 2 (249 aa).

A divalent metal cation is bound by residues Asp8, Asp9, Ser40, and Asn90.

It belongs to the SurE nucleotidase family. A divalent metal cation serves as cofactor.

It localises to the cytoplasm. The catalysed reaction is a ribonucleoside 5'-phosphate + H2O = a ribonucleoside + phosphate. Its function is as follows. Nucleotidase that shows phosphatase activity on nucleoside 5'-monophosphates. The polypeptide is 5'-nucleotidase SurE 2 (Pyrobaculum aerophilum (strain ATCC 51768 / DSM 7523 / JCM 9630 / CIP 104966 / NBRC 100827 / IM2)).